Consider the following 676-residue polypeptide: UvrABC system protein C (676 aa).

The GIY-YIG domain occupies 16-95 (VEPGVYRFRD…IKEFDPRFNI (80 aa)). One can recognise a UVR domain in the interval 208-243 (DRLVRDLERKMTAAAEDLDFERAARLRDDIGALRRA).

The protein belongs to the UvrC family. Interacts with UvrB in an incision complex.

It is found in the cytoplasm. Functionally, the UvrABC repair system catalyzes the recognition and processing of DNA lesions. UvrC both incises the 5' and 3' sides of the lesion. The N-terminal half is responsible for the 3' incision and the C-terminal half is responsible for the 5' incision. The protein is UvrABC system protein C of Mycobacterium sp. (strain KMS).